The following is a 179-amino-acid chain: Ubiquitin-conjugating enzyme E2 C (179 aa).

The tract at residues 1 to 31 is disordered; it reads MASQNRDPAATSVAAARKGAEPSGGAARGPV. Alanine 2 bears the N-acetylalanine mark. Serine 3 bears the Phosphoserine mark. Residues 30–175 form the UBC core domain; that stretch reads PVGKRLQQEL…LQETYSKQVT (146 aa). Residue cysteine 114 is the Glycyl thioester intermediate of the active site.

Belongs to the ubiquitin-conjugating enzyme family. As to quaternary structure, component of the APC/C complex, composed of at least 14 distinct subunits that assemble into a complex of at least 19 chains with a combined molecular mass of around 1.2 MDa. Within this complex, directly interacts with ANAPC2. In terms of processing, autoubiquitinated by the APC/C complex, leading to its degradation by the proteasome. Its degradation plays a central role in APC/C regulation, allowing cyclin-A accumulation before S phase entry. APC/C substrates inhibit the autoubiquitination of UBE2C/UBCH10 but not its E2 function, hence APC/C remaining active until its substrates have been destroyed.

It carries out the reaction S-ubiquitinyl-[E1 ubiquitin-activating enzyme]-L-cysteine + [E2 ubiquitin-conjugating enzyme]-L-cysteine = [E1 ubiquitin-activating enzyme]-L-cysteine + S-ubiquitinyl-[E2 ubiquitin-conjugating enzyme]-L-cysteine.. It catalyses the reaction S-ubiquitinyl-[E1 ubiquitin-activating enzyme]-L-cysteine + [acceptor protein]-L-lysine = [E1 ubiquitin-activating enzyme]-L-cysteine + N(6)-monoubiquitinyl-[acceptor protein]-L-lysine.. The protein operates within protein modification; protein ubiquitination. Accepts ubiquitin from the E1 complex and catalyzes its covalent attachment to other proteins. In vitro catalyzes 'Lys-11'- and 'Lys-48'-linked polyubiquitination. Acts as an essential factor of the anaphase promoting complex/cyclosome (APC/C), a cell cycle-regulated ubiquitin ligase that controls progression through mitosis. Acts by initiating 'Lys-11'-linked polyubiquitin chains on APC/C substrates, leading to the degradation of APC/C substrates by the proteasome and promoting mitotic exit. In Homo sapiens (Human), this protein is Ubiquitin-conjugating enzyme E2 C (UBE2C).